We begin with the raw amino-acid sequence, 628 residues long: MGSCARLLLLWGCTVVAAGLSGVAGVSSRCEKACNPRMGNLALGRKLWADTTCGQNATELYCFYSENTDLTCRQPKCDKCNAAYPHLAHLPSAMADSSFRFPRTWWQSAEDVHREKIQLDLEAEFYFTHLIVMFKSPRPAAMVLDRSQDFGKTWKPYKYFATNCSATFGLEDDVVKKGAICTSKYSSPFPCTGGEVIFKALSPPYDTENPYSAKVQEQLKITNLRVQLLKRQSCPCQRNDLNEEPQHFTHYAIYDFIVKGSCFCNGHADQCIPVHGFRPVKAPGTFHMVHGKCMCKHNTAGSHCQHCAPLYNDRPWEAADGKTGAPNECRTCKCNGHADTCHFDVNVWEASGNRSGGVCDDCQHNTEGQYCQRCKPGFYRDLRRPFSAPDACKPCSCHPVGSAVLPANSVTFCDPSNGDCPCKPGVAGRRCDRCMVGYWGFGDYGCRPCDCAGSCDPITGDCISSHTDIDWYHEVPDFRPVHNKSEPAWEWEDAQGFSALLHSGKCECKEQTLGNAKAFCGMKYSYVLKIKILSAHDKGTHVEVNVKIKKVLKSTKLKIFRGKRTLYPESWTDRGCTCPILNPGLEYLVAGHEDIRTGKLIVNMKSFVQHWKPSLGRKVMDILKRECK.

The signal sequence occupies residues 1 to 18 (MGSCARLLLLWGCTVVAA). A Laminin N-terminal domain is found at 30–261 (CEKACNPRMG…AIYDFIVKGS (232 aa)). N-linked (GlcNAc...) asparagine glycans are attached at residues asparagine 56 and asparagine 163. 12 disulfides stabilise this stretch: cysteine 262/cysteine 271, cysteine 264/cysteine 293, cysteine 295/cysteine 304, cysteine 307/cysteine 329, cysteine 332/cysteine 341, cysteine 334/cysteine 359, cysteine 362/cysteine 371, cysteine 374/cysteine 392, cysteine 395/cysteine 413, cysteine 397/cysteine 420, cysteine 422/cysteine 431, and cysteine 434/cysteine 446. Laminin EGF-like domains are found at residues 262–331 (CFCN…ECRT), 332–394 (CKCN…ACKP), and 395–448 (CSCH…GCRP). A glycan (N-linked (GlcNAc...) asparagine) is linked at asparagine 353. The N-linked (GlcNAc...) asparagine glycan is linked to asparagine 483. 2 disulfide bridges follow: cysteine 506/cysteine 576 and cysteine 520/cysteine 627. Residues 506–627 (CECKEQTLGN…KVMDILKREC (122 aa)) form the NTR domain.

As to quaternary structure, may form a homodimer. In terms of tissue distribution, expressed in kidney, spleen, mammary gland, aorta, heart, ovary, prostate and fetal spleen.

The protein localises to the secreted. The protein resides in the extracellular space. It localises to the extracellular matrix. It is found in the basement membrane. May play an important role in neural, kidney and vascular development. Promotes neurite elongation from olfactory bulb explants. The chain is Netrin-4 (NTN4) from Homo sapiens (Human).